A 198-amino-acid chain; its full sequence is Recombination protein RecR (198 aa).

The C4-type zinc finger occupies 57–72 (CAMCNTFTESAVCETC). Residues 80-175 (ALLCVVETPG…KVSRLARGVP (96 aa)) form the Toprim domain.

It belongs to the RecR family.

Its function is as follows. May play a role in DNA repair. It seems to be involved in an RecBC-independent recombinational process of DNA repair. It may act with RecF and RecO. This chain is Recombination protein RecR, found in Herminiimonas arsenicoxydans.